Reading from the N-terminus, the 393-residue chain is S-adenosylmethionine synthase (393 aa).

H16 lines the ATP pocket. D18 provides a ligand contact to Mg(2+). K(+) is bound at residue E44. L-methionine contacts are provided by E57 and Q100. A flexible loop region spans residues 100-110 (QSNDIAQGVDQ). Residues 167–169 (DAK), 238–239 (RF), D247, 253–254 (RK), A270, and K274 contribute to the ATP site. Residue D247 participates in L-methionine binding. K278 provides a ligand contact to L-methionine.

This sequence belongs to the AdoMet synthase family. Homotetramer; dimer of dimers. The cofactor is Mg(2+). K(+) serves as cofactor.

It is found in the cytoplasm. The enzyme catalyses L-methionine + ATP + H2O = S-adenosyl-L-methionine + phosphate + diphosphate. Its pathway is amino-acid biosynthesis; S-adenosyl-L-methionine biosynthesis; S-adenosyl-L-methionine from L-methionine: step 1/1. Functionally, catalyzes the formation of S-adenosylmethionine (AdoMet) from methionine and ATP. The overall synthetic reaction is composed of two sequential steps, AdoMet formation and the subsequent tripolyphosphate hydrolysis which occurs prior to release of AdoMet from the enzyme. This Methylibium petroleiphilum (strain ATCC BAA-1232 / LMG 22953 / PM1) protein is S-adenosylmethionine synthase.